The sequence spans 349 residues: MAIPITVLDCDLLLYGRGHRTLDRFKLDDVTDEYLMSMYGFPRQFIYYLVELLGASLSRPTQRSRAISPETQILAALGFYTSGSFQTRMGDAIGISQASMSRCVANVTEALVERASQFIHFPADEASVQALKDEFYGLAGIPGVIGVVDCMHVAIKAPNAEDLSYVNRKGLHSLNCLMVCDIRGALMTVETSWPGSLQDCVVLQQSSLSSQFEAGMHKESWLLGDSSFFLRTWLMTPLHIPETPAEYRYNMAHSATHSVIEKTFRTLCSRFRCLDGSKGALQYSPEKSSHIILACCVLHNISLEHGMDVWSSPVTGPVEQPPEEEYEHMESLDLEADRIRQELMLTHFS.

A DDE Tnp4 domain is found at 148–300 (VDCMHVAIKA…IILACCVLHN (153 aa)). The a divalent metal cation site is built by D149, D199, D225, and E261.

This sequence belongs to the HARBI1 family. In terms of assembly, interacts with NAIF1. A divalent metal cation is required as a cofactor. As to expression, detected in brain.

Its subcellular location is the nucleus. It is found in the cytoplasm. Its function is as follows. Transposase-derived protein that may have nuclease activity (Potential). Does not have transposase activity. This chain is Putative nuclease HARBI1 (HARBI1), found in Bos taurus (Bovine).